A 115-amino-acid polypeptide reads, in one-letter code: NADH-ubiquinone oxidoreductase chain 3 (115 aa).

The next 3 membrane-spanning stretches (helical) occupy residues 3-23 (FVLA…LTFW), 55-75 (FFLV…LLPL), and 84-104 (LPLM…GLTY).

Belongs to the complex I subunit 3 family. As to quaternary structure, core subunit of respiratory chain NADH dehydrogenase (Complex I) which is composed of 45 different subunits. Interacts with TMEM186. Interacts with TMEM242.

The protein resides in the mitochondrion inner membrane. The catalysed reaction is a ubiquinone + NADH + 5 H(+)(in) = a ubiquinol + NAD(+) + 4 H(+)(out). In terms of biological role, core subunit of the mitochondrial membrane respiratory chain NADH dehydrogenase (Complex I) which catalyzes electron transfer from NADH through the respiratory chain, using ubiquinone as an electron acceptor. Essential for the catalytic activity of complex I. The sequence is that of NADH-ubiquinone oxidoreductase chain 3 from Pongo pygmaeus (Bornean orangutan).